The chain runs to 536 residues: Formate--tetrahydrofolate ligase (536 aa).

51 to 58 provides a ligand contact to ATP; that stretch reads TPAGEGKT.

Belongs to the formate--tetrahydrofolate ligase family.

It catalyses the reaction (6S)-5,6,7,8-tetrahydrofolate + formate + ATP = (6R)-10-formyltetrahydrofolate + ADP + phosphate. Its pathway is one-carbon metabolism; tetrahydrofolate interconversion. The chain is Formate--tetrahydrofolate ligase from Thermoplasma acidophilum (strain ATCC 25905 / DSM 1728 / JCM 9062 / NBRC 15155 / AMRC-C165).